A 187-amino-acid chain; its full sequence is uncharacterized protein (187 aa).

The interval 42–63 (RTNGPGKDSFSFSTSGSKPSSS) is disordered. Residues 50–63 (SFSFSTSGSKPSSS) are compositionally biased toward low complexity.

This is an uncharacterized protein from Saccharomyces cerevisiae (strain ATCC 204508 / S288c) (Baker's yeast).